A 152-amino-acid polypeptide reads, in one-letter code: MMKKIDVKILDPRVGQQFPLPTYATSGSAGLDLRACLDDAVELAPGATTLLPTGLAIHIADPSLAAVILPRSGLGHKHGVVLGNLVGLIDSDYQGQLMVSVWNRGQQSFIIEPGERIAQMVFVPVVQAEFNLVEEFDATDRGEGGFGHSGRK.

Residues 71–73, Asn84, 88–90, and Met98 contribute to the substrate site; these read RSG and LID.

The protein belongs to the dUTPase family. It depends on Mg(2+) as a cofactor.

The catalysed reaction is dUTP + H2O = dUMP + diphosphate + H(+). It functions in the pathway pyrimidine metabolism; dUMP biosynthesis; dUMP from dCTP (dUTP route): step 2/2. Its function is as follows. This enzyme is involved in nucleotide metabolism: it produces dUMP, the immediate precursor of thymidine nucleotides and it decreases the intracellular concentration of dUTP so that uracil cannot be incorporated into DNA. This is Deoxyuridine 5'-triphosphate nucleotidohydrolase from Klebsiella pneumoniae (strain 342).